We begin with the raw amino-acid sequence, 871 residues long: Leucine--tRNA ligase (871 aa).

Positions 42–52 match the 'HIGH' region motif; it reads PYPSGSLHMGH. A 'KMSKS' region motif is present at residues 634 to 638; it reads TMSKS. Lys-637 lines the ATP pocket.

This sequence belongs to the class-I aminoacyl-tRNA synthetase family.

It is found in the cytoplasm. The catalysed reaction is tRNA(Leu) + L-leucine + ATP = L-leucyl-tRNA(Leu) + AMP + diphosphate. This chain is Leucine--tRNA ligase, found in Nostoc punctiforme (strain ATCC 29133 / PCC 73102).